The primary structure comprises 660 residues: tRNA 5-methylaminomethyl-2-thiouridine biosynthesis bifunctional protein MnmC (660 aa).

Residues 1 to 242 form a tRNA (mnm(5)s(2)U34)-methyltransferase region; it reads MTDRIVPATL…KRAMLVGEFA (242 aa). The tract at residues 266-660 is FAD-dependent cmnm(5)s(2)U34 oxidoreductase; sequence IGAGLAGCAV…VRALRHGRVA (395 aa).

The protein in the N-terminal section; belongs to the methyltransferase superfamily. tRNA (mnm(5)s(2)U34)-methyltransferase family. It in the C-terminal section; belongs to the DAO family. FAD serves as cofactor.

The protein resides in the cytoplasm. It carries out the reaction 5-aminomethyl-2-thiouridine(34) in tRNA + S-adenosyl-L-methionine = 5-methylaminomethyl-2-thiouridine(34) in tRNA + S-adenosyl-L-homocysteine + H(+). Its function is as follows. Catalyzes the last two steps in the biosynthesis of 5-methylaminomethyl-2-thiouridine (mnm(5)s(2)U) at the wobble position (U34) in tRNA. Catalyzes the FAD-dependent demodification of cmnm(5)s(2)U34 to nm(5)s(2)U34, followed by the transfer of a methyl group from S-adenosyl-L-methionine to nm(5)s(2)U34, to form mnm(5)s(2)U34. The sequence is that of tRNA 5-methylaminomethyl-2-thiouridine biosynthesis bifunctional protein MnmC from Burkholderia pseudomallei (strain K96243).